A 65-amino-acid polypeptide reads, in one-letter code: Metallothionein-like protein type 3 (65 aa).

The protein belongs to the metallothionein superfamily. Type 15 family.

Metallothioneins have a high content of cysteine residues that bind various heavy metals. The sequence is that of Metallothionein-like protein type 3 from Musa acuminata (Banana).